A 227-amino-acid chain; its full sequence is MKNILKVFNTTILALIIIIATFSNSANAADSGTLNYEVYKYNTNDTSIANDYFNKPAKYIKKNGKLYVQITVNHSHWITGMSIEGHKENIISKNTAKDERTSEFEVSKLNGKVDGKIDVYIDEKVNGKPFKYDHHYNITYKFNGPTDVAGANAPGKDDKNSASGSDKGSDGATTGQSESNSSNKDKVENPQTNAGTPAYIYAIPVASLALLIAITLFVRKKSKGNVE.

Positions 1–28 (MKNILKVFNTTILALIIIIATFSNSANA) are cleaved as a signal peptide. The NEAT domain occupies 29-150 (ADSGTLNYEV…KFNGPTDVAG (122 aa)). Heme-binding residues include serine 47, isoleucine 48, tyrosine 132, and tyrosine 136. The interval 149–191 (AGANAPGKDDKNSASGSDKGSDGATTGQSESNSSNKDKVENPQ) is disordered. Over residues 161-172 (SASGSDKGSDGA) the composition is skewed to low complexity. Residues 173 to 182 (TTGQSESNSS) are compositionally biased toward polar residues. Positions 189 to 193 (NPQTN) match the NPQTN sorting signal motif. Position 192 is a pentaglycyl murein peptidoglycan amidated threonine (threonine 192). A propeptide spans 193–227 (NAGTPAYIYAIPVASLALLIAITLFVRKKSKGNVE) (removed by sortase B).

The protein belongs to the IsdC family. In terms of assembly, monomer. Interacts with IsdA.

It is found in the secreted. The protein resides in the cell wall. Functionally, involved in heme (porphyrin) scavenging. Binds hemoglobin and almost exclusively free-base protoporphyrin IX. Probably has a role as the central conduit of the isd heme uptake system, i.e. mediates the transfer of the iron-containing nutrient from IsdABH to the membrane translocation system IsdDEF. Hemin-free IsdC (apo-IsdC) acquires hemin from hemin-containing IsdA (holo-IsdA) probably through the activated holo-IsdA-apo-IsdC complex and due to the higher affinity of apo-IsdC for the cofactor. The reaction is reversible. This is Iron-regulated surface determinant protein C (isdC) from Staphylococcus aureus (strain bovine RF122 / ET3-1).